The primary structure comprises 184 residues: Photosystem I assembly protein Ycf4 (184 aa).

2 helical membrane-spanning segments follow: residues 21 to 41 (YFWA…GLSS) and 63 to 83 (IIMT…WLTI).

The protein belongs to the Ycf4 family.

It is found in the plastid. The protein resides in the chloroplast thylakoid membrane. Functionally, seems to be required for the assembly of the photosystem I complex. In Gracilaria tenuistipitata var. liui (Red alga), this protein is Photosystem I assembly protein Ycf4.